A 183-amino-acid chain; its full sequence is ER membrane protein complex subunit 4 (183 aa).

The residue at position 2 (T2) is an N-acetylthreonine. Residues 2–66 are Cytoplasmic-facing; sequence TAQGGLVANR…VQETDRILVE (65 aa). The tract at residues 20–39 is disordered; sequence ELSGPGGGSRGRSDRGSGQG. Position 36 is a phosphoserine (S36). The helical transmembrane segment at 67–87 threads the bilayer; that stretch reads KRCWDIALGPLKQIPMNLFIM. Residues 88–98 are Lumenal-facing; it reads YMAGNTISIFP. Residues 99–120 traverse the membrane as a helical segment; it reads TMMVCMMAWRPIQALMAISATF. The Cytoplasmic segment spans residues 121–127; that stretch reads KMLESSS. A helical transmembrane segment spans residues 128 to 148; it reads QKFLQGLVYLIGNLMGLALAV. Residues 149–183 lie on the Lumenal side of the membrane; it reads YKCQSMGLLPTHASDWLAFIEPPERMEFSGGGLLL.

This sequence belongs to the EMC4 family. Component of the ER membrane protein complex (EMC). As to expression, isoform 1 is expressed in brain and heart. Isoform 2 is expressed in heart.

Its subcellular location is the endoplasmic reticulum membrane. Functionally, part of the endoplasmic reticulum membrane protein complex (EMC) that enables the energy-independent insertion into endoplasmic reticulum membranes of newly synthesized membrane proteins. Preferentially accommodates proteins with transmembrane domains that are weakly hydrophobic or contain destabilizing features such as charged and aromatic residues. Involved in the cotranslational insertion of multi-pass membrane proteins in which stop-transfer membrane-anchor sequences become ER membrane spanning helices. It is also required for the post-translational insertion of tail-anchored/TA proteins in endoplasmic reticulum membranes. By mediating the proper cotranslational insertion of N-terminal transmembrane domains in an N-exo topology, with translocated N-terminus in the lumen of the ER, controls the topology of multi-pass membrane proteins like the G protein-coupled receptors. By regulating the insertion of various proteins in membranes, it is indirectly involved in many cellular processes. The sequence is that of ER membrane protein complex subunit 4 (EMC4) from Homo sapiens (Human).